A 104-amino-acid chain; its full sequence is Flagellar hook-basal body complex protein FliE (104 aa).

The protein belongs to the FliE family.

Its subcellular location is the bacterial flagellum basal body. The polypeptide is Flagellar hook-basal body complex protein FliE (Escherichia fergusonii (strain ATCC 35469 / DSM 13698 / CCUG 18766 / IAM 14443 / JCM 21226 / LMG 7866 / NBRC 102419 / NCTC 12128 / CDC 0568-73)).